Consider the following 97-residue polypeptide: Cornifin (97 aa).

The tract at residues 1-42 is disordered; that stretch reads MSSQQQKQPCTPPPQPQQQQVKQPCQPPPQEPCVPKTKEPCH. The residue at position 2 (serine 2) is an N-acetylserine. 9 tandem repeats follow at residues 3-14, 18-29, 31-38, 39-46, 47-54, 55-62, 63-70, 71-78, and 79-85. The tract at residues 3 to 29 is 2 X 12 AA approximate repeats; that stretch reads SQQQKQPCTPPPQPQQQQVKQPCQPPP. The interval 31–85 is 7 X 8 AA approximate tandem repeats; that stretch reads EPCVPKTKEPCHPKVPEPCQPKVPEPCQPKVPEPCHPKVPEPCQPKVPEPCPSPV.

It belongs to the cornifin (SPRR) family. Not detected in normal lung tissue but seen in tumor tissues. Cells around the keratin pearls contain high levels.

It localises to the cytoplasm. Cross-linked envelope protein of keratinocytes. It is a keratinocyte protein that first appears in the cell cytosol, but ultimately becomes cross-linked to membrane proteins by transglutaminase. All that results in the formation of an insoluble envelope beneath the plasma membrane. The sequence is that of Cornifin (SPRP) from Sus scrofa (Pig).